The sequence spans 501 residues: Cytochrome P450 monooxygenase esdpH (501 aa).

Residues R5–C22 form a helical membrane-spanning segment. C446 serves as a coordination point for heme.

Belongs to the cytochrome P450 family. It depends on heme as a cofactor.

It is found in the membrane. Its pathway is secondary metabolite biosynthesis; terpenoid biosynthesis. In terms of biological role, cytochrome P450 monooxygenase; part of the cluster that mediates the biosynthesis of shearones, diterpenoid pyrones (DPs) which are structurally diverse meroterpenoids consisting of a diterpene linked by a pyrone, and which may exhibit a range of bioactivities. Whitin the pathway, esdpH takes part in the molecular scaffold modification via the hydroxylation at C-6' and can transform shearone C into shearone E, shearone D into shearone F, and shearone H into shearone I, the latter being the final product of the pathway. The molecular scaffold is commonly biosynthesized by a series of enzymes including the non-reducing polyketide synthase (NR-PKS) esdpA that generates an alpha-pyrone; the prenyltransferase esdpC that attaches a geranylgeranyl pyrophosphate (GGPP) produced by the GGPP synthase (GGPPS) esdpD onto the pyrone unit; the FAD-dependent monooxygenase esdpE that converts an olefin on the diterpene unit into an epoxide; and the terpene cyclase esdpB that catalyzes the cyclization reactions to give the molecular backbone shearone A. In the modification steps, esdpF oxidizes the hydroxy group to a ketone at C-3 and esdpG then attaches hydroxy groups at both C-11 and C-12. After that, esdpI hydroxylates at C-20 and esdpH hydroxylates at C-6'. The ether bridge is generated by nucleophilic attack of the hydroxy group at C-20 to the carbonyl carbon at C-3. EsdpH can also functions prior to esdpI. The different combinations of these modification enzymes lead to the production of diverse shearone derivatives, shearone I being the end product of the pathway. The alpha-ketoglutarate-dependent dioxygenase esdpJ seems not to be involved in this pathway. This Penicillium shearii (Eupenicillium shearii) protein is Cytochrome P450 monooxygenase esdpH.